A 423-amino-acid chain; its full sequence is Kynureninase (423 aa).

Residues Leu-105, Ser-106, 133 to 136 (FPSD), Asp-218, His-221, and Tyr-243 each bind pyridoxal 5'-phosphate. At Lys-244 the chain carries N6-(pyridoxal phosphate)lysine. Residues Trp-273 and Asn-301 each contribute to the pyridoxal 5'-phosphate site.

Belongs to the kynureninase family. In terms of assembly, homodimer. Pyridoxal 5'-phosphate is required as a cofactor.

It carries out the reaction L-kynurenine + H2O = anthranilate + L-alanine + H(+). It catalyses the reaction 3-hydroxy-L-kynurenine + H2O = 3-hydroxyanthranilate + L-alanine + H(+). It functions in the pathway amino-acid degradation; L-kynurenine degradation; L-alanine and anthranilate from L-kynurenine: step 1/1. The protein operates within cofactor biosynthesis; NAD(+) biosynthesis; quinolinate from L-kynurenine: step 2/3. Its function is as follows. Catalyzes the cleavage of L-kynurenine (L-Kyn) and L-3-hydroxykynurenine (L-3OHKyn) into anthranilic acid (AA) and 3-hydroxyanthranilic acid (3-OHAA), respectively. This chain is Kynureninase, found in Xanthomonas euvesicatoria pv. vesicatoria (strain 85-10) (Xanthomonas campestris pv. vesicatoria).